We begin with the raw amino-acid sequence, 304 residues long: Nod factor export ATP-binding protein I (304 aa).

The ABC transporter domain occupies 6 to 236; the sequence is IDFRNVEKRF…EIGCDVIEIY (231 aa). 38-45 contributes to the ATP binding site; the sequence is GPNGAGKT.

It belongs to the ABC transporter superfamily. Lipooligosaccharide exporter (TC 3.A.1.102) family. The complex is composed of two ATP-binding proteins (NodI) and two transmembrane proteins (NodJ).

Its subcellular location is the cell inner membrane. Part of the ABC transporter complex NodIJ involved in the export of the nodulation factors (Nod factors), the bacterial signal molecules that induce symbiosis and subsequent nodulation induction. Nod factors are LCO (lipo-chitin oligosaccharide), a modified beta-1,4-linked N-acetylglucosamine oligosaccharide. This subunit is responsible for energy coupling to the transport system. The chain is Nod factor export ATP-binding protein I from Burkholderia lata (strain ATCC 17760 / DSM 23089 / LMG 22485 / NCIMB 9086 / R18194 / 383).